We begin with the raw amino-acid sequence, 216 residues long: Probable transaldolase (216 aa).

The active-site Schiff-base intermediate with substrate is the K83.

It belongs to the transaldolase family. Type 3B subfamily.

Its subcellular location is the cytoplasm. It carries out the reaction D-sedoheptulose 7-phosphate + D-glyceraldehyde 3-phosphate = D-erythrose 4-phosphate + beta-D-fructose 6-phosphate. It participates in carbohydrate degradation; pentose phosphate pathway; D-glyceraldehyde 3-phosphate and beta-D-fructose 6-phosphate from D-ribose 5-phosphate and D-xylulose 5-phosphate (non-oxidative stage): step 2/3. In terms of biological role, transaldolase is important for the balance of metabolites in the pentose-phosphate pathway. This Clostridioides difficile (strain 630) (Peptoclostridium difficile) protein is Probable transaldolase.